Consider the following 378-residue polypeptide: Chaperone protein DnaJ (378 aa).

One can recognise a J domain in the interval 5-70; that stretch reads DYYEVLGVAK…QKRAAYDQYG (66 aa). The CR-type zinc-finger motif lies at 138–216; the sequence is GYDTQIRVPS…CHGSGKVKET (79 aa). Zn(2+) is bound by residues Cys-151, Cys-154, Cys-168, Cys-171, Cys-190, Cys-193, Cys-204, and Cys-207. 4 CXXCXGXG motif repeats span residues 151-158, 168-175, 190-197, and 204-211; these read CEVCHGSG, CPTCHGQG, CPKCHGTG, and CVHCHGSG.

This sequence belongs to the DnaJ family. As to quaternary structure, homodimer. It depends on Zn(2+) as a cofactor.

It is found in the cytoplasm. Functionally, participates actively in the response to hyperosmotic and heat shock by preventing the aggregation of stress-denatured proteins and by disaggregating proteins, also in an autonomous, DnaK-independent fashion. Unfolded proteins bind initially to DnaJ; upon interaction with the DnaJ-bound protein, DnaK hydrolyzes its bound ATP, resulting in the formation of a stable complex. GrpE releases ADP from DnaK; ATP binding to DnaK triggers the release of the substrate protein, thus completing the reaction cycle. Several rounds of ATP-dependent interactions between DnaJ, DnaK and GrpE are required for fully efficient folding. Also involved, together with DnaK and GrpE, in the DNA replication of plasmids through activation of initiation proteins. This chain is Chaperone protein DnaJ, found in Burkholderia lata (strain ATCC 17760 / DSM 23089 / LMG 22485 / NCIMB 9086 / R18194 / 383).